The primary structure comprises 104 residues: Fusaric acid biosynthesis protein 2 (104 aa).

It belongs to the YciI family.

Its pathway is mycotoxin biosynthesis. Its function is as follows. Part of the gene cluster that mediates the biosynthesis of fusaric acid, a mycotoxin with low to moderate toxicity to animals and humans, but with high phytotoxic properties. L-aspartate is suggested as fusaric acid amino acid precursor that is activated and further processed to O-acetyl-L-homoserine by cluster enzymes aspartate kinase FUB3 and homoserine O-acetyltransferase FUB5, as well as enzymes of the primary metabolism. The polyketide synthase (PKS) FUB1 generates the triketide trans-2-hexenal which is presumptively released by the hydrolase FUB4 and linked to the NRPS-bound amino acid precursor by NAD(P)-dependent dehydrogenase FUB6. FUB1, FUB4, and the non-canonical NRPS Fub8 may form an enzyme complex. Further processing of the NRPS-bound intermediate might be carried out by FUB6 and the sulfhydrylase FUB7, enabling a spontaneous electrocyclization to close the carbon backbone of fusaric acid. Dihydrofusaric acid is likely to be released via reduction by the thioester reductase (TR) domain of FUB8 whereupon the final oxidation to fusaric acid may (also) be performed by the FMN-dependent dehydrogenase FUB9. This chain is Fusaric acid biosynthesis protein 2, found in Gibberella moniliformis (strain M3125 / FGSC 7600) (Maize ear and stalk rot fungus).